Consider the following 1642-residue polypeptide: MATAIRDVGVWRQTRTLLLKNYLIKCRTKKSSVQEILFPLFFLFWLILVSMMHPNKKYEEVSDIELSPMDKFSLSNVILGYTPVTNITSSIMQRVSTDHLPKVIVTEEYANEKELVAASLSKSSNFVGVVFKDTMSYELRFFPEMIPVSSIYMNSREGCSKTCDAAQYWSLGFTVLQASIDAAIIQLKTNVSVWSELESTKAVIMGEAAVVEIDTFPRGVILIYLVIAFSPFGYFLAIHIVAEKEKKLKEFLKIMGLHDTAFWLSWVLLYASLIFLMSLLMAVIATASSLFPQSSSIVIFLLFFLYGLSSVFFALMLTPLFKKSKHVGVVEFFVTVVFGFVGLLIVLIESFPRSLVWLFSPLCQCAFLIGIAQVMHLEDFNEGALFSNLTEGPYPLIITIIMLALDSVFYVLLAVYLDQVIPGEFGLRRSSLYFLKPSYWSKNKRNYKELSEGNINGNISLNEIVEPVSSEFIGKEAIRISGIQKSYRKKTENVEALRNLSFDIYEGQITALLGHSGTGKSTLMNILCGLCPPSDGFASIYGHRVSEIDEMFEARKMIGICPQSDINFDVLTVEENLSILASIKGIPANNIIQEVQKVLLDLDMQAIKDNQAKKLSGGQKRKLSVGIAVLGNPKILLLDEPTAGMDPCSRHIVWNLLKYRKANRVTVFSTHFMDEADILADRKAVISQGMLKCVGSSIFLKSKWGIGYRLSMYIDRYCATESLSSLVRQHIPAAALLQQNDQQLVYSLPFKDMDKFSGLFSALDIHSNLGVISYGVSMTTLEDVFLKLEVEAEIDQADYSVFTQQPREEETDSKSFDEMEQSLLILSETKASSVSTMSLWKQQVSTIAKFHFLSLKRESKSVRAVLLLLLIFFAVQIFMFFLHHSFKNAVVPIKLVPDLYFLKPGDKPHKYKTSLLLQNSTDSDINGLIEFFAHQNIMVAMFNDSDYVSAAPHSAALNVVRSEKDYVFSAVFNSTMVYCLPVMMNIISNYYLYHLNVTEAIQTWSTPFIQEITDIVFKIELYFQAALLGIIVTAMPPYFAMENAENHKIKAYTQLKLSGLLPSAYWVGQAVVDIPLFFVVLILMLGSLFAFHHGLYFYPAKFLAVVFCLIAYVPSVILFTYIASFTFKKILNTKEFWSFIYSVTALACVAITETTFFLQYAVTAVFHYTFCIAIPIYPLLGCLISFIKGSWKNMPKNENTYNPWDRLLVAVIMPYLQCILWIFLLQHYEKIHGGRSIRKDPFFRALSQKAKNKKFPEPPINEDEDEDVKAERLKVKELMGCQCCEEKPAIMVCNLHKEYDDKKDFLHSRKTTKVATKYISFCVKKGEILGLLGPNGAGKSTVINTLVGDVEPTSGKIFLGDYGSHSSEDDESIKCMGYCPQTNPLWPDLTLQEHFEIYGAVKGMSPGDMKEVISRITKALDLKEHLQKTVKKLPAGIKRKLCFALSMLGNPQVTLLDEPSTGMDPRAKQHMWRAIRTAFKNKKRAALLTTHYMEEAEAVCDRVAIMVSGQLRCIGTVQHLKSKFGKGYFLEIKLKDWIENLEIDRLQREIQYIFPNASRQESFSSILAFKIPKEDVQSLSQSFAKLEEAKRTFAIEEYSFSQATLEQVFVELTKEQEEEDNSCGTLASTLWWERTQEDRVVF.

The chain crosses the membrane as a helical span at residues 32-52 (SVQEILFPLFFLFWLILVSMM). Asn-86 carries N-linked (GlcNAc...) asparagine glycosylation. 5 consecutive transmembrane segments (helical) span residues 220–240 (VILI…AIHI), 264–284 (LSWV…MAVI), 297–317 (IVIF…ALML), 328–348 (GVVE…IVLI), and 355–375 (LVWL…AQVM). Asn-388 is a glycosylation site (N-linked (GlcNAc...) asparagine). Residues 396 to 416 (LIITIIMLALDSVFYVLLAVY) traverse the membrane as a helical segment. Residue Asn-458 is glycosylated (N-linked (GlcNAc...) asparagine). In terms of domain architecture, ABC transporter 1 spans 478–713 (IRISGIQKSY…WGIGYRLSMY (236 aa)). 514 to 521 (GHSGTGKS) contacts ATP. The chain crosses the membrane as a helical span at residues 864 to 884 (AVLLLLLIFFAVQIFMFFLHH). Asn-919 carries an N-linked (GlcNAc...) asparagine glycan. Residues 967 to 987 (VFSAVFNSTMVYCLPVMMNII) form a helical membrane-spanning segment. Asn-996 carries N-linked (GlcNAc...) asparagine glycosylation. Helical transmembrane passes span 1021-1041 (LYFQ…YFAM), 1071-1091 (VVDI…LFAF), 1102-1122 (FLAV…FTYI), 1138-1158 (SFIY…TFFL), 1164-1184 (AVFH…GCLI), and 1207-1227 (LLVA…LLQH). The ABC transporter 2 domain maps to 1290–1533 (IMVCNLHKEY…FGKGYFLEIK (244 aa)). 1333–1340 (GPNGAGKS) serves as a coordination point for ATP.

Belongs to the ABC transporter superfamily. ABCA family. N-glycosylated. As to expression, expressed in cardiomyocytes, oligodendrocytes and astrocytes in brain, alveolar type 2 cells in lung and follicular cells in the thyroid gland (at protein level). Detected in brain, testis, lung, heart, liver, kidney, skeletal muscle and placenta. Strongly expressed in the basal cells of the seminiferous tubules, interstitial cells consisting of Leydig cells, as well as the tunica albuginea. In the epididymis, specifically and very strongly expressed in the connective tissue outlining the cylindrical epithelium in the corpus and cauda regions, including fibrocytes and smooth muscle cells, as well as within the basal and tall columnar cells of the corpus cylindrical epithelium. Highly expressed in the brain with high expression in cortical and hippocampal neurons and moderately in the lung.

The protein resides in the golgi apparatus membrane. The protein localises to the lysosome membrane. It is found in the late endosome membrane. Its subcellular location is the cell membrane. It catalyses the reaction cholesterol(in) + ATP + H2O = cholesterol(out) + ADP + phosphate + H(+). Its function is as follows. Cholesterol efflux transporter in macrophages that is responsible for APOAI/high-density lipoproteins (HDL) formation at the plasma membrane under high cholesterol levels and participates in reverse cholesterol transport. May play a role in the processing of autolysosomes. This Mus musculus (Mouse) protein is Cholesterol transporter ABCA5.